Here is an 899-residue protein sequence, read N- to C-terminus: Bifunctional uridylyltransferase/uridylyl-removing enzyme (899 aa).

Residues 1–347 (MFISDPTDSL…PESERPEKSV (347 aa)) are uridylyltransferase. The interval 348–718 (LNARFNRVGD…EHRELALDAV (371 aa)) is uridylyl-removing. The HD domain maps to 465–581 (VDAHILLLIR…TKFANLVGNV (117 aa)). ACT domains follow at residues 719-804 (QIFI…RLPR) and 827-899 (VMSL…TPSC).

Belongs to the GlnD family. Requires Mg(2+) as cofactor.

It catalyses the reaction [protein-PII]-L-tyrosine + UTP = [protein-PII]-uridylyl-L-tyrosine + diphosphate. The enzyme catalyses [protein-PII]-uridylyl-L-tyrosine + H2O = [protein-PII]-L-tyrosine + UMP + H(+). Its activity is regulated as follows. Uridylyltransferase (UTase) activity is inhibited by glutamine, while glutamine activates uridylyl-removing (UR) activity. Functionally, modifies, by uridylylation and deuridylylation, the PII regulatory proteins (GlnB and homologs), in response to the nitrogen status of the cell that GlnD senses through the glutamine level. Under low glutamine levels, catalyzes the conversion of the PII proteins and UTP to PII-UMP and PPi, while under higher glutamine levels, GlnD hydrolyzes PII-UMP to PII and UMP (deuridylylation). Thus, controls uridylylation state and activity of the PII proteins, and plays an important role in the regulation of nitrogen assimilation and metabolism. The protein is Bifunctional uridylyltransferase/uridylyl-removing enzyme of Psychrobacter sp. (strain PRwf-1).